A 656-amino-acid polypeptide reads, in one-letter code: Very long-chain specific acyl-CoA dehydrogenase, mitochondrial (656 aa).

A disordered region spans residues 1–33 (MQSARMTPSVGRQLLRLGARSSRSTTVLQGQPR). A mitochondrion-targeting transit peptide spans 1–41 (MQSARMTPSVGRQLLRLGARSSRSTTVLQGQPRPISAQRLY). The interval 42 to 483 (AREATQAVLD…ALQGCMDKGK (442 aa)) is catalytic. K52 is modified (N6-acetyllysine). Residues K72 and K128 each carry the N6-acetyllysine; alternate modification. Residues K72 and K128 each carry the N6-succinyllysine; alternate modification. An N6-succinyllysine modification is found at K196. Residue 215 to 224 (FCLTEPSSGS) participates in FAD binding. Position 238 is an S-nitrosocysteine (C238). K240 is modified (N6-acetyllysine; alternate). The residue at position 240 (K240) is an N6-succinyllysine; alternate. Residue 250–252 (WIS) participates in FAD binding. K269 is modified (N6-succinyllysine). K277 and K279 each carry N6-acetyllysine; alternate. 2 positions are modified to N6-succinyllysine; alternate: K277 and K279. Residues K299 and K317 each carry the N6-acetyllysine modification. K332 carries the N6-acetyllysine; alternate modification. K332 bears the N6-succinyllysine; alternate mark. Residue K373 is modified to N6-succinyllysine. 462-464 (FEG) serves as a coordination point for substrate. Catalysis depends on E463, which acts as the Proton acceptor. FAD is bound at residue 465–467 (AND). Position 483 is an N6-acetyllysine; alternate (K483). K483 is modified (N6-succinyllysine; alternate). Positions 484-517 (ELTGLGNALKNPFGNVGLLMGEAGKQLRRRTGIG) are membrane-anchoring. 2 positions are modified to phosphoserine: S518 and S523. Residue K551 is modified to N6-acetyllysine. K557 carries the N6-acetyllysine; alternate modification. K557 carries the post-translational modification N6-succinyllysine; alternate. Q563 lines the FAD pocket. Residue K640 is modified to N6-succinyllysine.

This sequence belongs to the acyl-CoA dehydrogenase family. As to quaternary structure, homodimer. Homodimerizes after import into the mitochondrion. FAD is required as a cofactor. Post-translationally, S-nitrosylation at Cys-238 in liver improves catalytic efficiency.

The protein localises to the mitochondrion inner membrane. It carries out the reaction a very-long-chain 2,3-saturated fatty acyl-CoA + oxidized [electron-transfer flavoprotein] + H(+) = a very-long-chain (2E)-enoyl-CoA + reduced [electron-transfer flavoprotein]. The catalysed reaction is dodecanoyl-CoA + oxidized [electron-transfer flavoprotein] + H(+) = (2E)-dodecenoyl-CoA + reduced [electron-transfer flavoprotein]. The enzyme catalyses tetradecanoyl-CoA + oxidized [electron-transfer flavoprotein] + H(+) = (2E)-tetradecenoyl-CoA + reduced [electron-transfer flavoprotein]. It catalyses the reaction oxidized [electron-transfer flavoprotein] + hexadecanoyl-CoA + H(+) = (2E)-hexadecenoyl-CoA + reduced [electron-transfer flavoprotein]. It carries out the reaction octadecanoyl-CoA + oxidized [electron-transfer flavoprotein] + H(+) = (2E)-octadecenoyl-CoA + reduced [electron-transfer flavoprotein]. The catalysed reaction is eicosanoyl-CoA + oxidized [electron-transfer flavoprotein] + H(+) = (2E)-eicosenoyl-CoA + reduced [electron-transfer flavoprotein]. The enzyme catalyses docosanoyl-CoA + oxidized [electron-transfer flavoprotein] + H(+) = (2E)-docosenoyl-CoA + reduced [electron-transfer flavoprotein]. It catalyses the reaction tetracosanoyl-CoA + oxidized [electron-transfer flavoprotein] + H(+) = (2E)-tetracosenoyl-CoA + reduced [electron-transfer flavoprotein]. It functions in the pathway lipid metabolism; mitochondrial fatty acid beta-oxidation. In terms of biological role, very long-chain specific acyl-CoA dehydrogenase is one of the acyl-CoA dehydrogenases that catalyze the first step of mitochondrial fatty acid beta-oxidation, an aerobic process breaking down fatty acids into acetyl-CoA and allowing the production of energy from fats. The first step of fatty acid beta-oxidation consists in the removal of one hydrogen from C-2 and C-3 of the straight-chain fatty acyl-CoA thioester, resulting in the formation of trans-2-enoyl-CoA. Among the different mitochondrial acyl-CoA dehydrogenases, very long-chain specific acyl-CoA dehydrogenase acts specifically on acyl-CoAs with saturated 12 to 24 carbons long primary chains. The protein is Very long-chain specific acyl-CoA dehydrogenase, mitochondrial of Mus musculus (Mouse).